Reading from the N-terminus, the 486-residue chain is Protein nucleotidyltransferase YdiU (486 aa).

Residues Gly-90, Gly-92, Arg-93, Lys-113, Asp-125, Gly-126, Arg-176, and Arg-183 each coordinate ATP. Residue Asp-252 is the Proton acceptor of the active site. The Mg(2+) site is built by Asn-253 and Asp-262. Residue Asp-262 participates in ATP binding.

The protein belongs to the SELO family. It depends on Mg(2+) as a cofactor. Mn(2+) serves as cofactor.

The enzyme catalyses L-seryl-[protein] + ATP = 3-O-(5'-adenylyl)-L-seryl-[protein] + diphosphate. It catalyses the reaction L-threonyl-[protein] + ATP = 3-O-(5'-adenylyl)-L-threonyl-[protein] + diphosphate. The catalysed reaction is L-tyrosyl-[protein] + ATP = O-(5'-adenylyl)-L-tyrosyl-[protein] + diphosphate. It carries out the reaction L-histidyl-[protein] + UTP = N(tele)-(5'-uridylyl)-L-histidyl-[protein] + diphosphate. The enzyme catalyses L-seryl-[protein] + UTP = O-(5'-uridylyl)-L-seryl-[protein] + diphosphate. It catalyses the reaction L-tyrosyl-[protein] + UTP = O-(5'-uridylyl)-L-tyrosyl-[protein] + diphosphate. Its function is as follows. Nucleotidyltransferase involved in the post-translational modification of proteins. It can catalyze the addition of adenosine monophosphate (AMP) or uridine monophosphate (UMP) to a protein, resulting in modifications known as AMPylation and UMPylation. In Pseudomonas aeruginosa (strain LESB58), this protein is Protein nucleotidyltransferase YdiU.